Consider the following 301-residue polypeptide: Ribosomal RNA small subunit methyltransferase H (301 aa).

S-adenosyl-L-methionine-binding positions include 33-35 (GGH), Asp-52, Phe-79, Asp-100, and Gln-107.

The protein belongs to the methyltransferase superfamily. RsmH family.

It is found in the cytoplasm. The catalysed reaction is cytidine(1402) in 16S rRNA + S-adenosyl-L-methionine = N(4)-methylcytidine(1402) in 16S rRNA + S-adenosyl-L-homocysteine + H(+). Its function is as follows. Specifically methylates the N4 position of cytidine in position 1402 (C1402) of 16S rRNA. The protein is Ribosomal RNA small subunit methyltransferase H of Mycoplasmopsis synoviae (strain 53) (Mycoplasma synoviae).